A 416-amino-acid polypeptide reads, in one-letter code: Serine hydroxymethyltransferase (416 aa).

(6S)-5,6,7,8-tetrahydrofolate-binding positions include Leu121 and 125–127 (GHL). At Lys229 the chain carries N6-(pyridoxal phosphate)lysine.

The protein belongs to the SHMT family. Homodimer. The cofactor is pyridoxal 5'-phosphate.

The protein resides in the cytoplasm. The catalysed reaction is (6R)-5,10-methylene-5,6,7,8-tetrahydrofolate + glycine + H2O = (6S)-5,6,7,8-tetrahydrofolate + L-serine. The protein operates within one-carbon metabolism; tetrahydrofolate interconversion. It participates in amino-acid biosynthesis; glycine biosynthesis; glycine from L-serine: step 1/1. Functionally, catalyzes the reversible interconversion of serine and glycine with tetrahydrofolate (THF) serving as the one-carbon carrier. This reaction serves as the major source of one-carbon groups required for the biosynthesis of purines, thymidylate, methionine, and other important biomolecules. Also exhibits THF-independent aldolase activity toward beta-hydroxyamino acids, producing glycine and aldehydes, via a retro-aldol mechanism. The polypeptide is Serine hydroxymethyltransferase (Azoarcus sp. (strain BH72)).